A 440-amino-acid polypeptide reads, in one-letter code: Deoxyguanosinetriphosphate triphosphohydrolase-like protein (440 aa).

The 196-residue stretch at 61–256 (RLIHSLEVSC…MEAADDLCYS (196 aa)) folds into the HD domain.

It belongs to the dGTPase family. Type 3 subfamily.

In Synechocystis sp. (strain ATCC 27184 / PCC 6803 / Kazusa), this protein is Deoxyguanosinetriphosphate triphosphohydrolase-like protein.